The chain runs to 258 residues: Calcium release-activated calcium channel protein 1 (258 aa).

Residues 1-63 are Cytoplasmic-facing; sequence MYPECGVETK…SRAKLKASSR (63 aa). The helical transmembrane segment at 64–81 threads the bilayer; it reads TSALLSGFAMVAMVEVQL. Residues 82–91 are Extracellular-facing; sequence EPNHAYPPGL. The helical transmembrane segment at 92–112 threads the bilayer; sequence LIAFSACTTVLVAVHLFALMV. The Cytoplasmic portion of the chain corresponds to 113–145; the sequence is STCILPNIEAVSNVHNLNSVKESPHERMHHHIE. A helical membrane pass occupies residues 146 to 166; the sequence is LAWAFSTVIGTLLFLAEVVLL. Residues 167–192 are Extracellular-facing; that stretch reads CWVKFLPVNSPKISSNETSAVSSGQA. N182 carries an N-linked (GlcNAc...) asparagine glycan. A helical membrane pass occupies residues 193 to 213; it reads AAITSTAIMVPFGLVFIVFAV. Topologically, residues 214-258 are cytoplasmic; that stretch reads HFYRSLVSHKTDRQFQELNELAELAQLQDQLDHRGDPVQSPVHYA.

This sequence belongs to the Orai family.

It localises to the cell membrane. Its function is as follows. Ca(2+) release-activated Ca(2+) (CRAC) channel subunit which mediates Ca(2+) influx following depletion of intracellular Ca(2+) stores. This Xenopus laevis (African clawed frog) protein is Calcium release-activated calcium channel protein 1 (orai1).